The sequence spans 475 residues: Ribulose bisphosphate carboxylase large chain (475 aa).

Residues Met1 to Ser2 constitute a propeptide that is removed on maturation. Pro3 is subject to N-acetylproline. N6,N6,N6-trimethyllysine is present on Lys14. Residues Asn123 and Thr173 each coordinate substrate. Lys175 acts as the Proton acceptor in catalysis. Residue Lys177 participates in substrate binding. 3 residues coordinate Mg(2+): Lys201, Asp203, and Glu204. N6-carboxylysine is present on Lys201. The active-site Proton acceptor is the His294. Positions 295, 327, and 379 each coordinate substrate.

Belongs to the RuBisCO large chain family. Type I subfamily. Heterohexadecamer of 8 large chains and 8 small chains; disulfide-linked. The disulfide link is formed within the large subunit homodimers. Requires Mg(2+) as cofactor. Post-translationally, the disulfide bond which can form in the large chain dimeric partners within the hexadecamer appears to be associated with oxidative stress and protein turnover.

It is found in the plastid. The protein localises to the chloroplast. It catalyses the reaction 2 (2R)-3-phosphoglycerate + 2 H(+) = D-ribulose 1,5-bisphosphate + CO2 + H2O. The enzyme catalyses D-ribulose 1,5-bisphosphate + O2 = 2-phosphoglycolate + (2R)-3-phosphoglycerate + 2 H(+). In terms of biological role, ruBisCO catalyzes two reactions: the carboxylation of D-ribulose 1,5-bisphosphate, the primary event in carbon dioxide fixation, as well as the oxidative fragmentation of the pentose substrate in the photorespiration process. Both reactions occur simultaneously and in competition at the same active site. This Betula papyrifera (Paper birch) protein is Ribulose bisphosphate carboxylase large chain.